The chain runs to 344 residues: Dihydroorotate dehydrogenase (quinone) (344 aa).

Residues 61–65 (AGLDK) and Thr-85 contribute to the FMN site. Substrate is bound at residue Lys-65. Position 110–114 (110–114 (NRMGF)) interacts with substrate. FMN is bound by residues Asn-138 and Asn-171. Asn-171 contacts substrate. The active-site Nucleophile is the Ser-174. Asn-176 is a binding site for substrate. Residues Lys-216 and Thr-244 each coordinate FMN. 245-246 (NT) contacts substrate. FMN contacts are provided by residues Gly-267, Gly-296, and 317-318 (YS).

The protein belongs to the dihydroorotate dehydrogenase family. Type 2 subfamily. Monomer. FMN is required as a cofactor.

It localises to the cell membrane. The catalysed reaction is (S)-dihydroorotate + a quinone = orotate + a quinol. It functions in the pathway pyrimidine metabolism; UMP biosynthesis via de novo pathway; orotate from (S)-dihydroorotate (quinone route): step 1/1. In terms of biological role, catalyzes the conversion of dihydroorotate to orotate with quinone as electron acceptor. The protein is Dihydroorotate dehydrogenase (quinone) of Psychrobacter arcticus (strain DSM 17307 / VKM B-2377 / 273-4).